Here is a 147-residue protein sequence, read N- to C-terminus: Deoxyuridine 5'-triphosphate nucleotidohydrolase (147 aa).

Residues 67–69, asparagine 80, and 84–86 each bind substrate; these read RSG and LID.

It belongs to the dUTPase family. The cofactor is Mg(2+).

It carries out the reaction dUTP + H2O = dUMP + diphosphate + H(+). The protein operates within pyrimidine metabolism; dUMP biosynthesis; dUMP from dCTP (dUTP route): step 2/2. Its function is as follows. This enzyme is involved in nucleotide metabolism: it produces dUMP, the immediate precursor of thymidine nucleotides and it decreases the intracellular concentration of dUTP so that uracil cannot be incorporated into DNA. This chain is Deoxyuridine 5'-triphosphate nucleotidohydrolase, found in Gloeobacter violaceus (strain ATCC 29082 / PCC 7421).